A 177-amino-acid polypeptide reads, in one-letter code: uncharacterized protein (177 aa).

The protein to B.subtilis YutG.

This is an uncharacterized protein from Bacillus subtilis (strain 168).